Reading from the N-terminus, the 178-residue chain is Glucagon-1 (178 aa).

An N-terminal signal peptide occupies residues 1–21; sequence MFGIHSLAGVLLLVIVQRQLA. Propeptides lie at residues 83 to 87, 123 to 134, and 171 to 178; these read SGAPS, ESAEESRNGPMS, and SNKRQEDH.

Belongs to the glucagon family.

The protein localises to the secreted. Its function is as follows. Promotes hydrolysis of glycogen and lipids, and raises the blood sugar level. This Oncorhynchus mykiss (Rainbow trout) protein is Glucagon-1 (gcg1).